Consider the following 314-residue polypeptide: uncharacterized protein (314 aa).

2 stretches are compositionally biased toward basic residues: residues 1 to 16 and 49 to 65; these read MAGN…KAGT and AAKR…RRPA. The disordered stretch occupies residues 1–73; sequence MAGNSKRRGA…PARKTDETEL (73 aa). Residues G266, I286, and L295 each coordinate S-adenosyl-L-methionine.

The protein belongs to the class IV-like SAM-binding methyltransferase superfamily. RNA methyltransferase TrmH family.

This is an uncharacterized protein from Mycobacterium sp. (strain KMS).